The following is a 405-amino-acid chain: DNA polymerase processivity factor (405 aa).

The segment at 354 to 376 (GAGVKRRASEEEESDQPPKKLFP) is disordered. Positions 358-373 (KRRASEEEESDQPPKK) match the Bipartite nuclear localization signal motif.

This sequence belongs to the herpesviridae DNA polymerase processivity factor family. Interacts with the DNA polymerase catalytic subunit. Interacts with the origin-binding protein.

It localises to the host nucleus. Functionally, plays an essential role in viral DNA replication by acting as the polymerase accessory subunit. Associates with the viral polymerase to increase its processivity and forms high-affinity direct interactions with DNA. Facilitates the origin-binding protein loading onto DNA thus increasing its ability to assemble into a functional complex capable of unwinding duplex DNA. In Equine herpesvirus 1 (strain Ab4p) (EHV-1), this protein is DNA polymerase processivity factor.